The following is a 70-amino-acid chain: Toxin Boma6d (70 aa).

An LCN-type CS-alpha/beta domain is found at 2 to 68 (RDAYIAQNYN…VPIKVEGKCH (67 aa)). Disulfide bonds link cysteine 12/cysteine 67, cysteine 16/cysteine 40, cysteine 22/cysteine 50, and cysteine 26/cysteine 52.

It belongs to the long (4 C-C) scorpion toxin superfamily. Sodium channel inhibitor family. Alpha subfamily. Expressed by the venom gland.

The protein localises to the secreted. Functionally, alpha toxins bind voltage-independently at site-3 of sodium channels (Nav) and inhibit the inactivation of the activated channels, thereby blocking neuronal transmission. This chain is Toxin Boma6d, found in Buthus occitanus mardochei (Moroccan scorpion).